A 393-amino-acid chain; its full sequence is Iripin-3 (393 aa).

Positions 1–16 are cleaved as a signal peptide; it reads MKVITAFLSVFVLCSA. 2 N-linked (GlcNAc...) asparagine glycosylation sites follow: N104 and N265.

The protein belongs to the serpin family. Interacts with human KLKB1. Interacts with human ST14. Interacts with human F2 (thrombin). Saliva (at protein level). Expressed in salivary gland. Expressed in ovary during blood feeding.

It localises to the secreted. Its function is as follows. Serine protease inhibitor that modulates blood feeding of ticks on vertebrate species. Moderately inhibits host plasma kallikrein (KLKB1), matriptase (ST14), trypsin, plasmin (PLG), thrombin (F2) and coagulation factor VIIa (F7). Slightly inhibits host alpha-chymotrypsin, tPA/tissue-type plasminogen activator (PLAT), uPA/urokinase-type plasminogen activator (PLAU) and coagulation factor XIIa (F12). Slightly inhibits the extrinsic pathway while not affecting the intrinsic and common pathways of host blood coagulation. Decreases synthesis and secretion of IL6 by mouse bone marrow-derived macrophages. Decreases viability of mouse B- and T-cells. Decreases proliferation of mouse CD4+ T-cells in response to stimulation. Inhibits Th1 immune responses in mouse cells. Promotes differentiation of mouse regulatory T-cells. The polypeptide is Iripin-3 (Ixodes ricinus (Common tick)).